Reading from the N-terminus, the 264-residue chain is Protein GrpE (264 aa).

The segment covering 36–49 (KVQSKKVSSDHSSS) has biased composition (basic and acidic residues). A disordered region spans residues 36 to 59 (KVQSKKVSSDHSSSEDNASSDINS). Residues 50-59 (EDNASSDINS) are compositionally biased toward low complexity.

The protein belongs to the GrpE family. Homodimer.

It is found in the cytoplasm. In terms of biological role, participates actively in the response to hyperosmotic and heat shock by preventing the aggregation of stress-denatured proteins, in association with DnaK and GrpE. It is the nucleotide exchange factor for DnaK and may function as a thermosensor. Unfolded proteins bind initially to DnaJ; upon interaction with the DnaJ-bound protein, DnaK hydrolyzes its bound ATP, resulting in the formation of a stable complex. GrpE releases ADP from DnaK; ATP binding to DnaK triggers the release of the substrate protein, thus completing the reaction cycle. Several rounds of ATP-dependent interactions between DnaJ, DnaK and GrpE are required for fully efficient folding. This chain is Protein GrpE, found in Peanut witches'-broom phytoplasma.